The following is a 476-amino-acid chain: tRNA(Ile)-lysidine synthase (476 aa).

ATP is bound at residue Ser-30–Ser-35.

This sequence belongs to the tRNA(Ile)-lysidine synthase family.

The protein localises to the cytoplasm. It catalyses the reaction cytidine(34) in tRNA(Ile2) + L-lysine + ATP = lysidine(34) in tRNA(Ile2) + AMP + diphosphate + H(+). In terms of biological role, ligates lysine onto the cytidine present at position 34 of the AUA codon-specific tRNA(Ile) that contains the anticodon CAU, in an ATP-dependent manner. Cytidine is converted to lysidine, thus changing the amino acid specificity of the tRNA from methionine to isoleucine. In Bacillus cereus (strain ATCC 14579 / DSM 31 / CCUG 7414 / JCM 2152 / NBRC 15305 / NCIMB 9373 / NCTC 2599 / NRRL B-3711), this protein is tRNA(Ile)-lysidine synthase.